Consider the following 143-residue polypeptide: MAKKIVGYIKLQIPAGKANPSPPVGPALGQRQLNIMEFCKAFNAATQKMEPGLPVPVVITAYADKSFTFILKTTPASVLIKKLAGLSKGSAQPHVDKVGKLTRSQAEEIAKIKMADLTAADMDAAVRTIAGSARSMGVEVDGV.

This sequence belongs to the universal ribosomal protein uL11 family. Part of the ribosomal stalk of the 50S ribosomal subunit. Interacts with L10 and the large rRNA to form the base of the stalk. L10 forms an elongated spine to which L12 dimers bind in a sequential fashion forming a multimeric L10(L12)X complex. Post-translationally, one or more lysine residues are methylated.

Forms part of the ribosomal stalk which helps the ribosome interact with GTP-bound translation factors. This Nitrosomonas europaea (strain ATCC 19718 / CIP 103999 / KCTC 2705 / NBRC 14298) protein is Large ribosomal subunit protein uL11.